Here is a 1408-residue protein sequence, read N- to C-terminus: ABC transporter B family member 20 (1408 aa).

Residues 14-49 (HMQPLTPVSEVSEPPESPSPYLDPGAESGGGTGTAA) form a disordered region. Residues 20–39 (PVSEVSEPPESPSPYLDPGA) show a composition bias toward low complexity. A helical transmembrane segment spans residues 86–106 (VLMIVGSVAAAAHGTALIVYL). The 294-residue stretch at 88–381 (MIVGSVAAAA…AATNFYSFDQ (294 aa)) folds into the ABC transmembrane type-1 1 domain. The N-linked (GlcNAc...) asparagine glycan is linked to Asn-120. The next 3 membrane-spanning stretches (helical) occupy residues 141 to 161 (IVYI…CWIL), 214 to 233 (VGNY…IGFV), and 238 to 260 (IALI…NIFL). A glycan (N-linked (GlcNAc...) asparagine) is linked at Asn-293. The next 2 helical transmembrane spans lie at 312 to 332 (GILI…LAIC) and 353 to 373 (GEII…NQAA). The 236-residue stretch at 414–649 (IEFRNVYFSY…GGLYAELLKC (236 aa)) folds into the ABC transporter 1 domain. Residue 449 to 456 (GRNGSGKS) coordinates ATP. Asn-451 is a glycosylation site (N-linked (GlcNAc...) asparagine). Disordered regions lie at residues 676 to 735 (SSAG…SLDC) and 752 to 816 (LPHL…DAQH). Residues 762–771 (CPQQKSNGSE) are compositionally biased toward polar residues. An N-linked (GlcNAc...) asparagine glycan is attached at Asn-768. A compositionally biased stretch (basic and acidic residues) spans 802 to 816 (DDTKANGKASKDAQH). An ABC transmembrane type-1 2 domain is found at 836–1124 (AVLGSLGAAI…PFGLAPYILK (289 aa)). 6 helical membrane-spanning segments follow: residues 841 to 861 (LGAA…ALVV), 881 to 901 (LIIA…HFYF), 959 to 979 (IFIQ…LLGW), 983 to 1003 (LVAL…KLWL), 1062 to 1082 (IGFA…LLLW), and 1103 to 1123 (MVFS…PYIL). Residues 1159-1396 (IELKNVDFCY…NGLYVRLMQP (238 aa)) enclose the ABC transporter 2 domain. Residue Asn-1179 is glycosylated (N-linked (GlcNAc...) asparagine). An ATP-binding site is contributed by 1194 to 1201 (GVSGSGKS). Asn-1261 and Asn-1347 each carry an N-linked (GlcNAc...) asparagine glycan.

This sequence belongs to the ABC transporter superfamily. ABCB family. Multidrug resistance exporter (TC 3.A.1.201) subfamily. Expressed in aerial tissues.

It localises to the membrane. It catalyses the reaction (indol-3-yl)acetate(in) + ATP + H2O = (indol-3-yl)acetate(out) + ADP + phosphate + H(+). Its function is as follows. Probable auxin efflux transporter that contributes, together with ABCB6 and in a FKBP42/TWD1-dependent manner, to the regulation of leaf position and morphology, internode distribution, roots development, and inflorescence organization, probably by modulating auxin repartition. The chain is ABC transporter B family member 20 from Arabidopsis thaliana (Mouse-ear cress).